We begin with the raw amino-acid sequence, 1385 residues long: Kinesin-like protein KIF15 (1385 aa).

Residues 1–24 (MAPGCKSELRNVTNSHSNQPSNED) form a disordered region. The segment covering 10 to 21 (RNVTNSHSNQPS) has biased composition (polar residues). The 338-residue stretch at 26 to 363 (AIKVFVRIRP…LNFAQRAKLI (338 aa)) folds into the Kinesin motor domain. Residue 109–116 (GQTGSGKT) coordinates ATP. The stretch at 368-1385 (VVNEDTQGNV…NVFLKERKKE (1018 aa)) forms a coiled coil. Residue Lys-1007 is modified to N6-acetyllysine. Phosphoserine occurs at positions 1139 and 1167. The tract at residues 1222–1243 (DMKRQGESSSQSRPDSQQLKNE) is disordered. Residues 1228–1241 (ESSSQSRPDSQQLK) are compositionally biased toward polar residues.

It belongs to the TRAFAC class myosin-kinesin ATPase superfamily. Kinesin family. KLP2 subfamily. As to quaternary structure, interacts with MKI67 and TPX2. Expressed in sympathetic neurons.

It localises to the cytoplasm. It is found in the cytoskeleton. Its subcellular location is the spindle. Its function is as follows. Plus-end directed kinesin-like motor enzyme involved in mitotic spindle assembly. The chain is Kinesin-like protein KIF15 (Kif15) from Rattus norvegicus (Rat).